We begin with the raw amino-acid sequence, 488 residues long: MIMSNLWILTLISTILAVFAAVLIIFRRRISASTTEWPVGPKTLPIIGNLHILGGTALHVVLHKLAEVYGSVMTIWIGSWKPVIIVSDFDRAWEVLVNKSSDYSAREMPEITKIGTANWRTISSSDSGPFWATLRKGLQSVALSPQHLASQTAHQERDIIKLIKNLKDEAALNSGMVKPLDHLKKATVRLISRLIYGQDFDDDKYVEDMHDVIEFLIRISGYAQLAEVFYYAKYLPSHKRAVTGAEEAKRRVIALVRPFLQSNPATNTYLHFLKSQLYPEEVIIFAIFEAYLLGVDSTSSTTAWALAFLIREPSVQEKLYQELKNFTANNNRTMLKVEDVNKLPYLQAVVKETMRMKPIAPLAIPHKACKDTSLMGKKVDKGTKVMVNIHALHHTEKVWKEPYKFMPERFLQKHDKAMEQSLLPFSAGMRICAGMELGKLQFSFSLANLVNAFKWSCVSDGVLPDMSDLLGFVLFMKTPLEARIVPRL.

A helical transmembrane segment spans residues 6–26; that stretch reads LWILTLISTILAVFAAVLIIF. Residue C432 participates in heme binding.

The protein belongs to the cytochrome P450 family. Heme is required as a cofactor.

It localises to the membrane. It catalyses the reaction (S)-tetrahydrocolumbamine + reduced [NADPH--hemoprotein reductase] + O2 = (S)-canadine + oxidized [NADPH--hemoprotein reductase] + 2 H2O + H(+). The protein operates within alkaloid biosynthesis. Its function is as follows. Cytochrome P450 involved in the biosynthesis of the benzylisoquinoline alkaloid noscapine. Converts (S)-tetrahydrocolumbamine to (S)-canadine. The polypeptide is (S)-canadine synthase CYP719A21 (Papaver somniferum (Opium poppy)).